A 1220-amino-acid chain; its full sequence is Myosin-2 (1220 aa).

The span at Met1–Lys12 shows a compositional bias: polar residues. Disordered stretches follow at residues Met1–Ser54 and Gln68–Lys95. Residues Glu20 to Asp33 are compositionally biased toward basic and acidic residues. The span at Ser40 to Ser54 shows a compositional bias: low complexity. Basic and acidic residues predominate over residues Glu82–Lys95. Residues Lys160–Pro209 enclose the Myosin N-terminal SH3-like domain. A Myosin motor domain is found at Glu213–Lys879. ATP contacts are provided by residues Gly304 to Thr311 and Asn353 to Lys361. Actin-binding regions lie at residues Leu638–Leu672 and Leu759–Ser781. 3 IQ domains span residues Val881–Val910, Met904–Asp933, and Glu942–Leu971. Disordered stretches follow at residues Gln968–Leu1007 and Ser1075–Thr1118. Composition is skewed to polar residues over residues Pro997–Asp1006 and Thr1098–Thr1118. Residues Ser1003–Leu1071 adopt a coiled-coil conformation.

Belongs to the TRAFAC class myosin-kinesin ATPase superfamily. Myosin family. Plant myosin class VIII subfamily. In terms of assembly, homodimer. In terms of tissue distribution, expressed in flowers, leaves and roots.

The protein resides in the cell junction. Its subcellular location is the plasmodesma. It is found in the endosome. Its function is as follows. Myosin heavy chain that is required for the cell cycle-regulated transport of various organelles and proteins for their segregation. Functions by binding with its tail domain to receptor proteins on organelles and exerting force with its N-terminal motor domain against actin filaments, thereby transporting its cargo along polarized actin cables. Involved in endocytosis via its action in endosomal trafficking. In Arabidopsis thaliana (Mouse-ear cress), this protein is Myosin-2 (VIII-2).